Reading from the N-terminus, the 290-residue chain is Acetylglutamate kinase (290 aa).

Residues 65-66 (GG), arginine 87, and asparagine 186 contribute to the substrate site.

Belongs to the acetylglutamate kinase family. ArgB subfamily.

Its subcellular location is the cytoplasm. The enzyme catalyses N-acetyl-L-glutamate + ATP = N-acetyl-L-glutamyl 5-phosphate + ADP. Its pathway is amino-acid biosynthesis; L-arginine biosynthesis; N(2)-acetyl-L-ornithine from L-glutamate: step 2/4. Its function is as follows. Catalyzes the ATP-dependent phosphorylation of N-acetyl-L-glutamate. The sequence is that of Acetylglutamate kinase from Mycobacterium sp. (strain JLS).